A 328-amino-acid chain; its full sequence is Malate dehydrogenase (328 aa).

11-17 is an NAD(+) binding site; that stretch reads GAAGQIG. Positions 94 and 100 each coordinate substrate. NAD(+)-binding positions include Asn107, Gln114, and 131 to 133; that span reads VGN. Substrate-binding residues include Asn133 and Arg164. Residue His189 is the Proton acceptor of the active site.

It belongs to the LDH/MDH superfamily. MDH type 2 family.

It carries out the reaction (S)-malate + NAD(+) = oxaloacetate + NADH + H(+). Catalyzes the reversible oxidation of malate to oxaloacetate. The polypeptide is Malate dehydrogenase (Xanthomonas axonopodis pv. citri (strain 306)).